Consider the following 223-residue polypeptide: Cytotoxic T-lymphocyte protein 4 (223 aa).

Positions 1 to 35 (MACSGFQSHGAWLELTSRTWPCTALFSLLFIPVFS) are cleaved as a signal peptide. The Extracellular portion of the chain corresponds to 38-161 (MHVAQPAVVL…IDPEPCPDSD (124 aa)). The Ig-like V-type domain maps to 39-140 (HVAQPAVVLA…VELLYPPPYY (102 aa)). The segment at 46-50 (VLANS) is homodimerization. 2 cysteine pairs are disulfide-bonded: Cys-58/Cys-129 and Cys-85/Cys-103. Residue Asn-113 is glycosylated (N-linked (GlcNAc...) asparagine). An important for interaction with CD80 and CD86 region spans residues 134–139 (LYPPPY). N-linked (GlcNAc...) asparagine glycosylation occurs at Asn-145. The homodimerization stretch occupies residues 150–155 (YVIDPE). A helical membrane pass occupies residues 162–182 (FLLWILAAVSSGLFFYSFLIT). The Cytoplasmic portion of the chain corresponds to 183 to 223 (AVSLSKMLKKRSPLTTGVYVKMPPTEPECEKQFQPYFIPIN). The residue at position 201 (Tyr-201) is a Phosphotyrosine; by TXK and JAK2.

Homodimer; disulfide-linked. Binds to CD80/B7-1 and CD86/B7.2. Interacts with ICOSLG. N-glycosylation is important for dimerization. In terms of processing, phosphorylation at Tyr-201 prevents binding to the AP-2 adapter complex, blocks endocytosis, and leads to retention of CTLA4 on the cell surface.

Its subcellular location is the cell membrane. In terms of biological role, inhibitory receptor acting as a major negative regulator of T-cell responses. The affinity of CTLA4 for its natural B7 family ligands, CD80 and CD86, is considerably stronger than the affinity of their cognate stimulatory coreceptor CD28. The polypeptide is Cytotoxic T-lymphocyte protein 4 (CTLA4) (Sus scrofa (Pig)).